Reading from the N-terminus, the 166-residue chain is NADH-ubiquinone oxidoreductase chain 6 (166 aa).

6 consecutive transmembrane segments (helical) span residues 4-24 (FFSLVLVFLVLSVVVLGVVSA), 27-47 (QGVVALMGVSFFCCIFMVFLG), 50-70 (FAALVMYIVYLGGLVVVFGYC), 82-102 (VGGTKYFIVCVSLLLVVLLCL), 109-129 (LLVYVNWGDLVCLEMNGVGVF), and 135-155 (WGLIVCSWGLLVVLFSILVIL).

This sequence belongs to the complex I subunit 6 family.

It is found in the mitochondrion membrane. It carries out the reaction a ubiquinone + NADH + 5 H(+)(in) = a ubiquinol + NAD(+) + 4 H(+)(out). In terms of biological role, core subunit of the mitochondrial membrane respiratory chain NADH dehydrogenase (Complex I) that is believed to belong to the minimal assembly required for catalysis. Complex I functions in the transfer of electrons from NADH to the respiratory chain. The immediate electron acceptor for the enzyme is believed to be ubiquinone. The sequence is that of NADH-ubiquinone oxidoreductase chain 6 (MT-ND6) from Lycodon semicarinatus (Ryukyu odd-tooth snake).